The primary structure comprises 914 residues: MRQKFRFAAYVLAGFGLIFLALTIAGARLYTDWLWFQSVNYQRVFATIIISDLGLRLAVGLTFFVLLFLNLMLTRRPLLKVSQNSAIIREKDVLTIQSSPLSQLITPKLLLLAFIALSALMAFLFNFTVAGDWITFQKFLHPTSFGIKDPVFNLDIGFYVFKLPFYIFIYKVINWVILVSAFWVLAAYFVVYFIQGNPGAIFRNISARYHFSFLAAIFFGLKAAGYQLEQYSLLFSHHGAVWGPGYTATHATLLAYKVLTYIALLCALAILINLFLRRFKLVIYSIGVLLIASVLLGGIYPAAVQKFMVTPNEIAMERPYLERNINFTRLAYNLDEIEKRYFPAGRVLTAEDIRANQDTISNIRLWDWEPLQQTYGQLQEMRLYYEFKDIDVDRYIVNGRYRQVMVAARELNQEHLPAQAKTWVNQRLKFTHGYGIAMSPVNELTGEGLPAFFLKDIPPTGPTDLQVTRPEIYYGEASDQYVIVNTRSQEFDYPKGEENVFSTYEGDGGVRVANFLRRLMFAFSLGDYKLLLSSEVDNNSRVLYYRNIRQRVPKIAPFLQYDNDPYIILSEGKLYWMWDAYTTTDKFPYSEPYNKNDNYIRNAVKVVVDAYTGKVDFYISDSSDPLVLTYSKIFPGMFKPLDSMPEDLRRHIRYPVDLFKTQAKMYAVYHMEDPQVFYNKEDKWNLPTEIYASEEKPMEPYYTVIKLPGENKPEYVLILPFTPQNKKNMIAWLAARSDGENYGKLISYSFPKQELVYGPMQVEARINQDTTISQQLTLWDQGGSRVIRGNLFAVPIKDALLYVEPLYLQAEQSRMPELRRVIVAHGEKVVMEPTLDKALEKIFGEGATVQKSVQQPVDVTQPQPEKSIAELANTANQIYDEAMKKIKAGDWAGYGEDLSRLKQVLAELAERAGK.

The next 7 helical transmembrane spans lie at 7–27 (FAAY…IAGA), 48–68 (IIIS…VLLF), 109–129 (LLLL…NFTV), 173–193 (INWV…VVYF), 209–229 (YHFS…YQLE), 252–272 (TLLA…AILI), and 281–301 (LVIY…GIYP).

This sequence belongs to the UPF0182 family.

It localises to the cell membrane. This is UPF0182 protein PTH_1387 from Pelotomaculum thermopropionicum (strain DSM 13744 / JCM 10971 / SI).